A 372-amino-acid polypeptide reads, in one-letter code: Glycerophosphodiester phosphodiesterase GDPD6 (372 aa).

A signal peptide spans 1 to 21; it reads MAFKYLLPLLLLSLLVANCAS. A disordered region spans residues 32–58; it reads KHATKKPLQTSRPYNLAHRGSNGELPE. Residues 44 to 362 enclose the GP-PDE domain; the sequence is PYNLAHRGSN…DFTGSLHNYQ (319 aa). 3 N-linked (GlcNAc...) asparagine glycosylation sites follow: N120, N239, and N260.

The protein belongs to the glycerophosphoryl diester phosphodiesterase family. In terms of tissue distribution, expressed in flowers and siliques.

It catalyses the reaction a sn-glycero-3-phosphodiester + H2O = an alcohol + sn-glycerol 3-phosphate + H(+). This is Glycerophosphodiester phosphodiesterase GDPD6 from Arabidopsis thaliana (Mouse-ear cress).